A 609-amino-acid chain; its full sequence is Protein FRIGIDA (609 aa).

Over residues Met-1–Pro-18 the composition is skewed to low complexity. A disordered region spans residues Met-1–Glu-31. Coiled coils occupy residues Asp-60–Asn-97 and Gln-409–Glu-440. Disordered regions lie at residues Arg-454–Asp-488 and Ser-587–Lys-609. The segment covering Tyr-474–Asp-484 has biased composition (basic and acidic residues). Positions Leu-594 to Lys-609 are enriched in polar residues.

It belongs to the Frigida family. As to quaternary structure, homodimer. Component of the transcription activator complex FRI-C composed of FRI, FRL1, SUF4, FLX and FES1. Interacts (via N-terminus) with FRL1 and (via C-terminus) with FLX (via N-terminus), SUF4 (via C-terminus) and FES1 (via C-terminus). Interacts with ASHH2 and RIN1, a component of the SWR1 chromatin-remodeling complex. Interacts with CBP20, FIP1 and FIP2. As to expression, expressed in ovules, but not in stamens.

Its subcellular location is the nucleus speckle. Required for the regulation of flowering time in the late-flowering phenotype. Involved in the enrichment of a WDR5A-containing COMPASS-like complex at the 'FLOWERING LOCUS C' that trimethylates histone H3 'Lys-4', leading to FLC up-regulation and RNA levels increase. Variants with an early-flowering phenotype (Including cv. Columbia, cv. Landsberg Erecta and cv. Wassilewskija) show loss-of-function mutations of FRI. Able to delay flowering independently of FRL1 activity. Dispensable for the reactivation of FLC in early embryogenesis, but required to maintain high levels of FLC expression in later embryonic and vegetative development. Suppresses the repression of FLC by the autonomous pathway, but has no effect on the expression of the genes involved in this pathway. The chain is Protein FRIGIDA from Arabidopsis thaliana (Mouse-ear cress).